The following is a 713-amino-acid chain: MPNYTVPPDPADTSWDSPYSIPVQIVVWIIIIVLSLETIIGNAMVVMAYRIERNISKQVSNRYIVSLAISDLIIGIEGFPFFTVYVLNGDRWPLGWVACQTWLFLDYTLCLVSILTVLLITADRYLSVCHTAKYLKWQSPTKTQLLIVMSWLLPAIIFGIMIYGWQAMTGQSTSMSGAECSAPFLSNPYVNMGMYVAYYWTTLVAMLILYKGIHQAAKNLEKKAKAKERRHIALILSQRLGTQVGVSLMLQSKAEKEKAEEAQKDSGYTSNQAGDANNLRRFGFSEPETSQFRVDPNSNNNLNVEGSLNTENDQNLGVIEEERSGFLSRRESNESYYPGPHPTAANSRRCSEMEKVSLLSESDGVPSTRPAKSYGRLSLRSRYSASESITTTHENDEKEVEKADSLQKLFADDELGSVLNFKEEKLKNTDSNNDSDTTSVILQRSRKYKKNKRPRSSRRSEHSTPRQIAKVKQAEGTAAQLIEESVPDDDQTETIEVKRTDRWVVSMKKRIARALIRRRSTTRPERGSSSNSDDSSSEVEGEEKPEVRNNGLKIPQLTVNNENRGETSSQPGRDRLAPPNKTDTFLSASGVSRKISTISTVITREKVISSIFAPIAVFNRGRKQTKAEKRAHKAFRTITFIVGFFAILWSPYYIMATVYGFCKGECIPSFLYTLSYYMCYLNSSGNPFAYALANRQFRSAFMRMFRGNFNKVA.

The Extracellular segment spans residues 1–20; that stretch reads MPNYTVPPDPADTSWDSPYS. N3 carries an N-linked (GlcNAc...) asparagine glycan. A helical membrane pass occupies residues 21-41; the sequence is IPVQIVVWIIIIVLSLETIIG. The Cytoplasmic segment spans residues 42–66; it reads NAMVVMAYRIERNISKQVSNRYIVS. The helical transmembrane segment at 67–87 threads the bilayer; the sequence is LAISDLIIGIEGFPFFTVYVL. The Extracellular portion of the chain corresponds to 88-101; it reads NGDRWPLGWVACQT. Cysteines 99 and 180 form a disulfide. Residues 102–122 form a helical membrane-spanning segment; sequence WLFLDYTLCLVSILTVLLITA. Residues 123–144 lie on the Cytoplasmic side of the membrane; sequence DRYLSVCHTAKYLKWQSPTKTQ. Residues 145 to 165 traverse the membrane as a helical segment; it reads LLIVMSWLLPAIIFGIMIYGW. At 166-189 the chain is on the extracellular side; it reads QAMTGQSTSMSGAECSAPFLSNPY. The helical transmembrane segment at 190-210 threads the bilayer; sequence VNMGMYVAYYWTTLVAMLILY. At 211–633 the chain is on the cytoplasmic side; sequence KGIHQAAKNL…QTKAEKRAHK (423 aa). Disordered stretches follow at residues 256 to 350, 381 to 403, 427 to 475, and 515 to 585; these read KEKA…SRRC, SRYSASESITTTHENDEKEVEKA, KNTD…KQAE, and LIRR…TDTF. 2 stretches are compositionally biased toward polar residues: residues 266–275 and 287–315; these read SGYTSNQAGD and PETSQFRVDPNSNNNLNVEGSLNTENDQN. Composition is skewed to basic and acidic residues over residues 320 to 333 and 393 to 403; these read EEERSGFLSRRESN and HENDEKEVEKA. Residues 429–439 show a composition bias toward low complexity; that stretch reads TDSNNDSDTTS. Basic residues predominate over residues 444-457; that stretch reads RSRKYKKNKRPRSS. Residues 557–571 show a composition bias toward polar residues; it reads LTVNNENRGETSSQP. Residues 634–656 traverse the membrane as a helical segment; it reads AFRTITFIVGFFAILWSPYYIMA. The Extracellular segment spans residues 657–670; sequence TVYGFCKGECIPSF. Residues 671–693 form a helical membrane-spanning segment; sequence LYTLSYYMCYLNSSGNPFAYALA. The Cytoplasmic portion of the chain corresponds to 694 to 713; the sequence is NRQFRSAFMRMFRGNFNKVA.

This sequence belongs to the G-protein coupled receptor 1 family. Muscarinic acetylcholine receptor subfamily. Expressed in head region of the larva. In adults, expression is seen in the periventricularis magnocellularis (PVM) neuron.

It localises to the cell membrane. The muscarinic acetylcholine receptor mediates various cellular responses, including inhibition of adenylate cyclase, breakdown of phosphoinositides and modulation of potassium channels through the action of G proteins. Primary transducing effect is Pi turnover. This is Probable muscarinic acetylcholine receptor gar-1 (gar-1) from Caenorhabditis elegans.